The chain runs to 439 residues: Arginine biosynthesis bifunctional protein ArgJ, mitochondrial (439 aa).

The substrate site is built by T175, K201, T212, E301, N434, and S439. The active-site Nucleophile is the T212.

The protein belongs to the ArgJ family. Heterodimer of an alpha and a beta chain. Post-translationally, the alpha and beta chains are autoproteolytically processed from a single precursor protein within the mitochondrion.

The protein localises to the mitochondrion matrix. It catalyses the reaction N(2)-acetyl-L-ornithine + L-glutamate = N-acetyl-L-glutamate + L-ornithine. The catalysed reaction is L-glutamate + acetyl-CoA = N-acetyl-L-glutamate + CoA + H(+). It participates in amino-acid biosynthesis; L-arginine biosynthesis; L-ornithine and N-acetyl-L-glutamate from L-glutamate and N(2)-acetyl-L-ornithine (cyclic): step 1/1. The protein operates within amino-acid biosynthesis; L-arginine biosynthesis; N(2)-acetyl-L-ornithine from L-glutamate: step 1/4. Catalyzes two activities which are involved in the cyclic version of arginine biosynthesis: the synthesis of acetylglutamate from glutamate and acetyl-CoA, and of ornithine by transacetylation between acetylornithine and glutamate. This Candida albicans (strain WO-1) (Yeast) protein is Arginine biosynthesis bifunctional protein ArgJ, mitochondrial.